A 157-amino-acid chain; its full sequence is Endoribonuclease YbeY (157 aa).

Zn(2+) contacts are provided by His-115, His-119, and His-125.

This sequence belongs to the endoribonuclease YbeY family. Requires Zn(2+) as cofactor.

The protein localises to the cytoplasm. Single strand-specific metallo-endoribonuclease involved in late-stage 70S ribosome quality control and in maturation of the 3' terminus of the 16S rRNA. The protein is Endoribonuclease YbeY of Micrococcus luteus (strain ATCC 4698 / DSM 20030 / JCM 1464 / CCM 169 / CCUG 5858 / IAM 1056 / NBRC 3333 / NCIMB 9278 / NCTC 2665 / VKM Ac-2230) (Micrococcus lysodeikticus).